A 156-amino-acid chain; its full sequence is MPRRGPVPKRDVLPDPIYNSKLVTRLINKIMIDGKKGKAQKILYTAFDIIRERTGKDPMEVFEQALKNVMPVLEVRARRVGGANYQVPVEVRPDRRVTLGLRWLVQYARLRGERTMEERLANEIMDAANNTGAAVKKREDTHKMAEANKAFAHYRW.

It belongs to the universal ribosomal protein uS7 family. As to quaternary structure, part of the 30S ribosomal subunit. Contacts proteins S9 and S11.

One of the primary rRNA binding proteins, it binds directly to 16S rRNA where it nucleates assembly of the head domain of the 30S subunit. Is located at the subunit interface close to the decoding center, probably blocks exit of the E-site tRNA. This Geobacillus sp. (strain WCH70) protein is Small ribosomal subunit protein uS7.